Consider the following 237-residue polypeptide: Phosphoribosylaminoimidazole-succinocarboxamide synthase (237 aa).

The protein belongs to the SAICAR synthetase family.

It carries out the reaction 5-amino-1-(5-phospho-D-ribosyl)imidazole-4-carboxylate + L-aspartate + ATP = (2S)-2-[5-amino-1-(5-phospho-beta-D-ribosyl)imidazole-4-carboxamido]succinate + ADP + phosphate + 2 H(+). The protein operates within purine metabolism; IMP biosynthesis via de novo pathway; 5-amino-1-(5-phospho-D-ribosyl)imidazole-4-carboxamide from 5-amino-1-(5-phospho-D-ribosyl)imidazole-4-carboxylate: step 1/2. The sequence is that of Phosphoribosylaminoimidazole-succinocarboxamide synthase from Hamiltonella defensa subsp. Acyrthosiphon pisum (strain 5AT).